Here is a 224-residue protein sequence, read N- to C-terminus: Ribonuclease T (224 aa).

Residues 20 to 195 (VVIDVETAGF…YDTQKTAELF (176 aa)) enclose the Exonuclease domain. Mg(2+) is bound by residues Asp-23, Glu-25, His-182, and Asp-187. The active-site Proton donor/acceptor is His-182.

The protein belongs to the RNase T family. Homodimer. Mg(2+) serves as cofactor.

Functionally, trims short 3' overhangs of a variety of RNA species, leaving a one or two nucleotide 3' overhang. Responsible for the end-turnover of tRNA: specifically removes the terminal AMP residue from uncharged tRNA (tRNA-C-C-A). Also appears to be involved in tRNA biosynthesis. The polypeptide is Ribonuclease T (Vibrio cholerae serotype O1 (strain ATCC 39315 / El Tor Inaba N16961)).